A 113-amino-acid polypeptide reads, in one-letter code: MFNSTALVIFAILFLLISADAFPIPSPNGEIDAMLIRNSIIGEDEDLMPTEISRRVLMAQKRYIGYETLRRDMVPCQKPGASYYDCRSGQANSYSRGCDTITRCARDTNDINT.

An N-terminal signal peptide occupies residues 1–21 (MFNSTALVIFAILFLLISADA). The propeptide at 22-58 (FPIPSPNGEIDAMLIRNSIIGEDEDLMPTEISRRVLM) is removed in mature form. Cystine bridges form between cysteine 76–cysteine 86 and cysteine 98–cysteine 104.

The protein belongs to the plant rapid alkalinization factor (RALF) family. Post-translationally, proteolytically cleaved, probably by S1P, a subtilisin-like serine protease (subtilase).

Its subcellular location is the secreted. Functionally, cell signaling peptide that may regulate plant stress, growth, and development. Mediates a rapid alkalinization of extracellular space by mediating a transient increase in the cytoplasmic Ca(2+) concentration leading to a calcium-dependent signaling events through a cell surface receptor and a concomitant activation of some intracellular mitogen-activated protein kinases. This is Protein RALF-like 31 (RALFL31) from Arabidopsis thaliana (Mouse-ear cress).